The chain runs to 628 residues: WW domain-containing adapter protein with coiled-coil (628 aa).

3 disordered regions span residues Met-1 to Ser-130, Glu-152 to Pro-338, and Asn-417 to Ser-532. Over residues Ser-37 to Thr-49 the composition is skewed to basic and acidic residues. A compositionally biased stretch (basic residues) spans Gly-74–Val-84. Positions Asn-101–Ser-121 are enriched in low complexity. In terms of domain architecture, WW spans Tyr-123–Glu-156. Composition is skewed to basic and acidic residues over residues Glu-152–Ser-168 and Pro-176–Ala-185. Over residues Asp-199 to Ser-213 the composition is skewed to polar residues. Residues Arg-214–Ser-227 are compositionally biased toward basic and acidic residues. Composition is skewed to low complexity over residues Ser-230 to Pro-260 and Ser-299 to Val-331. Residues Pro-420 to Val-446 are compositionally biased toward polar residues. A compositionally biased stretch (low complexity) spans Gly-467–Lys-486. Over residues Pro-511 to Ser-532 the composition is skewed to polar residues. A coiled-coil region spans residues Gln-599–Ser-625.

Its subcellular location is the nucleus. Functionally, acts as a linker between gene transcription and histone H2B monoubiquitination at 'Lys-120' (H2BK120ub1). Positive regulator of amino acid starvation-induced autophagy. Positively regulates MTOR activity. May negatively regulate the ubiquitin proteasome pathway. The protein is WW domain-containing adapter protein with coiled-coil (wac) of Xenopus tropicalis (Western clawed frog).